Reading from the N-terminus, the 215-residue chain is MHLTAENLAARRGEDMIFINISFYLAAGEALVLTGRNGSGKSTLLRVVAGLLKPEKGTVIFGDKESPEGQHPGEVSHYLGHRNAMKNELTVAENLDFWRHFLRSTCSSADLSVEDATEAVGLSGISHLPFGYLSAGQQRRFAFAKLLVAHRPVWILDEPTAALDASADRLFAGLIEAHLAKGGIVLAATHQPLGLKNAQELKMTGFAGVDRGVWG.

Residues 3–211 (LTAENLAARR…KMTGFAGVDR (209 aa)) form the ABC transporter domain. 35 to 42 (GRNGSGKS) lines the ATP pocket.

Belongs to the ABC transporter superfamily. CcmA exporter (TC 3.A.1.107) family. As to quaternary structure, the complex is composed of two ATP-binding proteins (CcmA) and two transmembrane proteins (CcmB).

It localises to the cell inner membrane. It carries out the reaction heme b(in) + ATP + H2O = heme b(out) + ADP + phosphate + H(+). In terms of biological role, part of the ABC transporter complex CcmAB involved in the biogenesis of c-type cytochromes; once thought to export heme, this seems not to be the case, but its exact role is uncertain. Responsible for energy coupling to the transport system. This chain is Cytochrome c biogenesis ATP-binding export protein CcmA, found in Rhizobium etli (strain ATCC 51251 / DSM 11541 / JCM 21823 / NBRC 15573 / CFN 42).